The primary structure comprises 174 residues: Crossover junction endodeoxyribonuclease RuvC (174 aa).

Catalysis depends on residues aspartate 8, glutamate 67, and aspartate 139. Mg(2+)-binding residues include aspartate 8, glutamate 67, and aspartate 139.

The protein belongs to the RuvC family. Homodimer which binds Holliday junction (HJ) DNA. The HJ becomes 2-fold symmetrical on binding to RuvC with unstacked arms; it has a different conformation from HJ DNA in complex with RuvA. In the full resolvosome a probable DNA-RuvA(4)-RuvB(12)-RuvC(2) complex forms which resolves the HJ. Mg(2+) serves as cofactor.

Its subcellular location is the cytoplasm. The catalysed reaction is Endonucleolytic cleavage at a junction such as a reciprocal single-stranded crossover between two homologous DNA duplexes (Holliday junction).. Its function is as follows. The RuvA-RuvB-RuvC complex processes Holliday junction (HJ) DNA during genetic recombination and DNA repair. Endonuclease that resolves HJ intermediates. Cleaves cruciform DNA by making single-stranded nicks across the HJ at symmetrical positions within the homologous arms, yielding a 5'-phosphate and a 3'-hydroxyl group; requires a central core of homology in the junction. The consensus cleavage sequence is 5'-(A/T)TT(C/G)-3'. Cleavage occurs on the 3'-side of the TT dinucleotide at the point of strand exchange. HJ branch migration catalyzed by RuvA-RuvB allows RuvC to scan DNA until it finds its consensus sequence, where it cleaves and resolves the cruciform DNA. The protein is Crossover junction endodeoxyribonuclease RuvC of Pseudomonas entomophila (strain L48).